We begin with the raw amino-acid sequence, 133 residues long: Fluoride-specific ion channel FluC 4 (133 aa).

A run of 3 helical transmembrane segments spans residues 7–27 (ILVL…SGYV), 37–57 (WGTF…AGLG), and 60–80 (LGGI…LLGG). Na(+) is bound by residues Gly79 and Thr82. The chain crosses the membrane as a helical span at residues 107–127 (IVASALLCVLAVAAGYGGIMW).

Belongs to the fluoride channel Fluc/FEX (TC 1.A.43) family.

It localises to the cell inner membrane. The catalysed reaction is fluoride(in) = fluoride(out). With respect to regulation, na(+) is not transported, but it plays an essential structural role and its presence is essential for fluoride channel function. Its function is as follows. Fluoride-specific ion channel. Important for reducing fluoride concentration in the cell, thus reducing its toxicity. The chain is Fluoride-specific ion channel FluC 4 from Brucella abortus biovar 1 (strain 9-941).